The following is a 362-amino-acid chain: Biotin synthase (362 aa).

One can recognise a Radical SAM core domain in the interval 39-267 (NVVQVSTLLS…ETQVRLSAGR (229 aa)). Residues cysteine 54, cysteine 58, and cysteine 61 each coordinate [4Fe-4S] cluster. Cysteine 98, cysteine 130, cysteine 190, and arginine 262 together coordinate [2Fe-2S] cluster. The tract at residues 317-362 (PFTKVSQPTTVEAKDSRYESLGEKPKWSRPSHTIEKNLELSGKGKN) is disordered. The span at 328 to 354 (EAKDSRYESLGEKPKWSRPSHTIEKNL) shows a compositional bias: basic and acidic residues.

The protein belongs to the radical SAM superfamily. Biotin synthase family. Homodimer. It depends on [4Fe-4S] cluster as a cofactor. The cofactor is [2Fe-2S] cluster.

It carries out the reaction (4R,5S)-dethiobiotin + (sulfur carrier)-SH + 2 reduced [2Fe-2S]-[ferredoxin] + 2 S-adenosyl-L-methionine = (sulfur carrier)-H + biotin + 2 5'-deoxyadenosine + 2 L-methionine + 2 oxidized [2Fe-2S]-[ferredoxin]. It functions in the pathway cofactor biosynthesis; biotin biosynthesis; biotin from 7,8-diaminononanoate: step 2/2. Its function is as follows. Catalyzes the conversion of dethiobiotin (DTB) to biotin by the insertion of a sulfur atom into dethiobiotin via a radical-based mechanism. The protein is Biotin synthase of Flavobacterium psychrophilum (strain ATCC 49511 / DSM 21280 / CIP 103535 / JIP02/86).